The primary structure comprises 1400 residues: DNA-directed RNA polymerase subunit beta' (1400 aa).

Zn(2+) contacts are provided by cysteine 70, cysteine 72, cysteine 85, and cysteine 88. Aspartate 460, aspartate 462, and aspartate 464 together coordinate Mg(2+). Cysteine 814, cysteine 888, cysteine 895, and cysteine 898 together coordinate Zn(2+). The disordered stretch occupies residues 1367-1400 (DRQAKRAEAQEGPSAEQATDNLAALLNAGFSSDE).

This sequence belongs to the RNA polymerase beta' chain family. As to quaternary structure, the RNAP catalytic core consists of 2 alpha, 1 beta, 1 beta' and 1 omega subunit. When a sigma factor is associated with the core the holoenzyme is formed, which can initiate transcription. Mg(2+) is required as a cofactor. Zn(2+) serves as cofactor.

The catalysed reaction is RNA(n) + a ribonucleoside 5'-triphosphate = RNA(n+1) + diphosphate. Functionally, DNA-dependent RNA polymerase catalyzes the transcription of DNA into RNA using the four ribonucleoside triphosphates as substrates. In Vibrio campbellii (strain ATCC BAA-1116), this protein is DNA-directed RNA polymerase subunit beta'.